Consider the following 273-residue polypeptide: MASTVDIASSFIEGAPPGELADVVADVKTLTSNGADIIPSLAPAFERYNETQLATVKLPGASQEVLISEYNKLDGNRYFDVESQTSFEVDHVTQEASAAQSYVLDSQNADLIKSLLKSLGAHAREHYPNCAYGVYPIENDSAVAILLVSNRYSPNNFWNGRFRATYQFPVSEPTTVTGKIQVDVHYYEDGNVALNTNKPLNLSVSSLSAESIISRIATAERDYQEDLNRAFVQMAEGAFKGLRRQLPITRQKVEWEKVGGYRLGQDISGGKGR.

It belongs to the F-actin-capping protein alpha subunit family. Component of the F-actin capping complex, composed of a heterodimer of an alpha and a beta subunit.

The protein localises to the cytoplasm. The protein resides in the cytoskeleton. It is found in the actin patch. F-actin-capping proteins bind in a Ca(2+)-independent manner to the fast growing ends of actin filaments (barbed end) thereby blocking the exchange of subunits at these ends. Unlike other capping proteins (such as gelsolin and severin), these proteins do not sever actin filaments. This chain is F-actin-capping protein subunit alpha (cap1), found in Aspergillus oryzae (strain ATCC 42149 / RIB 40) (Yellow koji mold).